Here is a 465-residue protein sequence, read N- to C-terminus: VGFKAGVKDYKLTYYTPDYQTKDTDILAAFRVTPQPGVPPEEAGAAVAAESSTGTWTTVWTDGLTSLDRYKGRCYHIEPVAGEENQYICYVAYPLDLFEEGSVTNMFTSIVGNVFGFKALRALRLEDLRIPTAYIKTFQGPPHGIQVERDKLNKYGRPLLGCTIKPKLGLSAKNYGRAVYECLRGGLDFTKDDENVNSQPFMRWRDRFLFCAEGIYKAQAETGEIKGHYLNATAGTCEEMIKRAVFARELGAPIVMHDYLTGGFTANTSLAHYCWDNGLLLHIHRAMHAVIDRQKNHGMHFRVLAKALRMSGGDHIHAGTVVGKLEGEREITLGFVDLLRDDYIEKDRSRGIYFTQDWVSLPGVIPVASGGIHVWHMPALTEIFGDDSVLQFGGGTLGHPWGNAPGAVANRVALEACVQARNEGRNLAREGNEIIREASKWSPELAAACEVWKEIKFEFEAMDTL.

Lysine 4 is modified (N6,N6,N6-trimethyllysine). Residues asparagine 113 and threonine 163 each contribute to the substrate site. Lysine 165 acts as the Proton acceptor in catalysis. A substrate-binding site is contributed by lysine 167. 3 residues coordinate Mg(2+): lysine 191, aspartate 193, and glutamate 194. Lysine 191 is modified (N6-carboxylysine). Histidine 284 serves as the catalytic Proton acceptor. The substrate site is built by arginine 285, histidine 317, and serine 369.

This sequence belongs to the RuBisCO large chain family. Type I subfamily. Heterohexadecamer of 8 large chains and 8 small chains; disulfide-linked. The disulfide link is formed within the large subunit homodimers. It depends on Mg(2+) as a cofactor. In terms of processing, the disulfide bond which can form in the large chain dimeric partners within the hexadecamer appears to be associated with oxidative stress and protein turnover.

It localises to the plastid. The protein localises to the chloroplast. The enzyme catalyses 2 (2R)-3-phosphoglycerate + 2 H(+) = D-ribulose 1,5-bisphosphate + CO2 + H2O. The catalysed reaction is D-ribulose 1,5-bisphosphate + O2 = 2-phosphoglycolate + (2R)-3-phosphoglycerate + 2 H(+). RuBisCO catalyzes two reactions: the carboxylation of D-ribulose 1,5-bisphosphate, the primary event in carbon dioxide fixation, as well as the oxidative fragmentation of the pentose substrate in the photorespiration process. Both reactions occur simultaneously and in competition at the same active site. The sequence is that of Ribulose bisphosphate carboxylase large chain from Combretum indicum (Rangoon creeper).